The chain runs to 300 residues: Sporulation protein SPS18 (300 aa).

Residues 11-130 (ENRKRLLRAK…LANEVRSNDI (120 aa)) form the Arf-GAP domain. The segment at 28-51 (CFECKSVNPQFVSCSFGIFICVNC) adopts a C4-type zinc-finger fold.

This chain is Sporulation protein SPS18 (SPS18), found in Saccharomyces cerevisiae (strain ATCC 204508 / S288c) (Baker's yeast).